The chain runs to 346 residues: Probable 3-hydroxyacyl-CoA dehydrogenase (346 aa).

Positions 322–346 are disordered; sequence RANLSPSATPCTPWKARKATSCAPP.

The protein belongs to the 3-hydroxyacyl-CoA dehydrogenase family.

It carries out the reaction a (3S)-3-hydroxyacyl-CoA + NAD(+) = a 3-oxoacyl-CoA + NADH + H(+). The chain is Probable 3-hydroxyacyl-CoA dehydrogenase from Deinococcus radiodurans (strain ATCC 13939 / DSM 20539 / JCM 16871 / CCUG 27074 / LMG 4051 / NBRC 15346 / NCIMB 9279 / VKM B-1422 / R1).